Here is a 357-residue protein sequence, read N- to C-terminus: Tetraacyldisaccharide 4'-kinase (357 aa).

49–56 (TIGGTGKT) lines the ATP pocket.

This sequence belongs to the LpxK family.

It catalyses the reaction a lipid A disaccharide + ATP = a lipid IVA + ADP + H(+). The protein operates within glycolipid biosynthesis; lipid IV(A) biosynthesis; lipid IV(A) from (3R)-3-hydroxytetradecanoyl-[acyl-carrier-protein] and UDP-N-acetyl-alpha-D-glucosamine: step 6/6. Transfers the gamma-phosphate of ATP to the 4'-position of a tetraacyldisaccharide 1-phosphate intermediate (termed DS-1-P) to form tetraacyldisaccharide 1,4'-bis-phosphate (lipid IVA). The chain is Tetraacyldisaccharide 4'-kinase from Porphyromonas gingivalis (strain ATCC 33277 / DSM 20709 / CIP 103683 / JCM 12257 / NCTC 11834 / 2561).